The sequence spans 235 residues: Elongation factor Tu (235 aa).

Residues 1–125 (KNMITGAAQM…QVDEYIPAPE (125 aa)) form the tr-type G domain. Residue 47 to 50 (NKQD) coordinates GTP.

The protein belongs to the TRAFAC class translation factor GTPase superfamily. Classic translation factor GTPase family. EF-Tu/EF-1A subfamily. Monomer.

The protein resides in the cytoplasm. The enzyme catalyses GTP + H2O = GDP + phosphate + H(+). Functionally, GTP hydrolase that promotes the GTP-dependent binding of aminoacyl-tRNA to the A-site of ribosomes during protein biosynthesis. The chain is Elongation factor Tu (tufA) from Leptolyngbya ectocarpi (Phormidium ectocarpi).